A 243-amino-acid chain; its full sequence is Carboxy-S-adenosyl-L-methionine synthase (243 aa).

S-adenosyl-L-methionine is bound by residues Tyr40, 65-67, 90-91, 118-119, Asn133, and Arg200; these read GCS, DN, and DI.

It belongs to the class I-like SAM-binding methyltransferase superfamily. Cx-SAM synthase family. As to quaternary structure, homodimer.

It carries out the reaction prephenate + S-adenosyl-L-methionine = carboxy-S-adenosyl-L-methionine + 3-phenylpyruvate + H2O. Catalyzes the conversion of S-adenosyl-L-methionine (SAM) to carboxy-S-adenosyl-L-methionine (Cx-SAM). This chain is Carboxy-S-adenosyl-L-methionine synthase, found in Shewanella sp. (strain W3-18-1).